A 185-amino-acid chain; its full sequence is Threonylcarbamoyl-AMP synthase (185 aa).

In terms of domain architecture, YrdC-like spans Met1 to Gly185. Positions Glu163 to Gly185 are disordered. Positions Thr164–Lys177 are enriched in basic and acidic residues.

It belongs to the SUA5 family. TsaC subfamily.

Its subcellular location is the cytoplasm. The catalysed reaction is L-threonine + hydrogencarbonate + ATP = L-threonylcarbamoyladenylate + diphosphate + H2O. Required for the formation of a threonylcarbamoyl group on adenosine at position 37 (t(6)A37) in tRNAs that read codons beginning with adenine. Catalyzes the conversion of L-threonine, HCO(3)(-)/CO(2) and ATP to give threonylcarbamoyl-AMP (TC-AMP) as the acyladenylate intermediate, with the release of diphosphate. In Vibrio parahaemolyticus serotype O3:K6 (strain RIMD 2210633), this protein is Threonylcarbamoyl-AMP synthase.